The chain runs to 349 residues: DNA replication and repair protein RecF (349 aa).

Residue 30–37 (GKNGSGKT) participates in ATP binding.

This sequence belongs to the RecF family.

Its subcellular location is the cytoplasm. Functionally, the RecF protein is involved in DNA metabolism; it is required for DNA replication and normal SOS inducibility. RecF binds preferentially to single-stranded, linear DNA. It also seems to bind ATP. The polypeptide is DNA replication and repair protein RecF (Francisella tularensis subsp. holarctica (strain FTNF002-00 / FTA)).